Here is a 317-residue protein sequence, read N- to C-terminus: UV DNA damage endonuclease (317 aa).

This sequence belongs to the uve1/UvsE family.

In terms of biological role, component in a DNA repair pathway. Removal of UV LIGHT damaged nucleotides. Recognizes pyrimidine dimers and cleave a phosphodiester bond immediately 5' to the lesion. The chain is UV DNA damage endonuclease from Bacillus cereus (strain 03BB102).